Reading from the N-terminus, the 608-residue chain is Elongation factor 4 (608 aa).

In terms of domain architecture, tr-type G spans 11-193; it reads SKIRNFSIIA…QIVEKVPAPD (183 aa). GTP contacts are provided by residues 23–28 and 140–143; these read DHGKST and NKID.

Belongs to the TRAFAC class translation factor GTPase superfamily. Classic translation factor GTPase family. LepA subfamily.

It is found in the cell membrane. The enzyme catalyses GTP + H2O = GDP + phosphate + H(+). Required for accurate and efficient protein synthesis under certain stress conditions. May act as a fidelity factor of the translation reaction, by catalyzing a one-codon backward translocation of tRNAs on improperly translocated ribosomes. Back-translocation proceeds from a post-translocation (POST) complex to a pre-translocation (PRE) complex, thus giving elongation factor G a second chance to translocate the tRNAs correctly. Binds to ribosomes in a GTP-dependent manner. The chain is Elongation factor 4 from Bacillus cytotoxicus (strain DSM 22905 / CIP 110041 / 391-98 / NVH 391-98).